Consider the following 183-residue polypeptide: RFKKIRRLGALPGFTSKRPRSGSDLKNQLRSGKKSQYRIRLEEKQKLRFHYGLTERQLLKYVHIAGKAKGSTGQILLQLLEMRLDNILFRLGMASTIPGARQLVNHRHILVNDRIVDIPSYRCKPRDIITTKNKQRSKALIQNYIASSPHHEELPNHLTIDPFQYKGLVNQIIDNKWIGLKIN.

Residues 82-143 (MRLDNILFRL…KQRSKALIQN (62 aa)) form the S4 RNA-binding domain.

It belongs to the universal ribosomal protein uS4 family. Part of the 30S ribosomal subunit. Contacts protein S5. The interaction surface between S4 and S5 is involved in control of translational fidelity.

It localises to the plastid. The protein resides in the chloroplast. One of the primary rRNA binding proteins, it binds directly to 16S rRNA where it nucleates assembly of the body of the 30S subunit. Functionally, with S5 and S12 plays an important role in translational accuracy. The protein is Small ribosomal subunit protein uS4c (rps4) of Aristea capitata.